The sequence spans 467 residues: F-box only protein 6 (467 aa).

In terms of domain architecture, F-box spans 114–163 (QEIWQEFPQDLFEDVVSRLPMATFFQFRAVCRKWNALIDSDSFSRCFTEL). Kelch repeat units follow at residues 163-211 (LPQT…MASA), 252-305 (GMTL…NFKS), and 406-456 (CLGN…IACG).

This Arabidopsis thaliana (Mouse-ear cress) protein is F-box only protein 6 (FBX6).